The primary structure comprises 421 residues: MAVDVAEYHLSVIKSPPGWEVGVYAAGALALLGIAAVSLWKLWTSGSFPSPSPFPNYDYRYLQQKYGESCAEAREKRVPAWNAQRASTRGPPSRKGSLSIEDTFESISELGPLELMGRELDLAPYGTLRKSQSADSLNSISSVSNTFGQDFTLGQVEVSMEYDTASHTLNVAVMQGKDLLEREEASFESCFMRVSLLPDEQIVGISRIQRNAYSIFFDEKFSIPLDPTALEEKSLRFSVFGIDEDERNVSTGVVELKLSVLDLPLQPFSGWLYLQDQNKAADAVGEILLSLSYLPTAERLTVVVVKAKNLIWTNDKTTADPFVKVYLLQDGRKMSKKKTAVKRDDPNPVFNEAMIFSVPAIVLQDLSLRVTVAESSSDGRGDNVGHVIIGPSASGMGTTHWNQMLATLRRPVSMWHAVRRN.

Residues 1-18 (MAVDVAEYHLSVIKSPPG) lie on the Vesicular side of the membrane. A helical transmembrane segment spans residues 19 to 39 (WEVGVYAAGALALLGIAAVSL). Residues 40–421 (WKLWTSGSFP…VSMWHAVRRN (382 aa)) are Cytoplasmic-facing. Phosphoserine occurs at positions 97, 99, and 214. C2 domains lie at 152-272 (TLGQ…SGWL) and 283-416 (AVGE…SMWH).

This sequence belongs to the synaptotagmin family. As to quaternary structure, homodimer. Can also form heterodimers. Interacts with SYT1. In terms of processing, phosphorylation of Ser-97 is required for mossy-fiber long-term potentiation.

It localises to the cytoplasmic vesicle. The protein resides in the secretory vesicle. The protein localises to the synaptic vesicle membrane. Functionally, synaptic vesicle phosphoprotein that enhances spontaneous neurotransmitter release but does not effect induced neurotransmitter release. Unlike other synaptotagmins, it does not bind Ca(2+) or phospholipids. Essential for mossy-fiber long-term potentiation in the hippocampus. The chain is Synaptotagmin-12 (SYT12) from Homo sapiens (Human).